The chain runs to 291 residues: Probable ABC transporter permease protein PH1038 (291 aa).

A run of 8 helical transmembrane segments spans residues 7-27, 75-95, 106-126, 133-153, 160-180, 208-228, 232-252, and 267-287; these read PFFF…YPVF, IVWI…FALL, IIKS…GLII, GAGV…AITW, ALFS…MLMY, FVIW…TLLW, IFDI…MVLA, and YAAV…LWLI. Positions 71–286 constitute an ABC transmembrane type-1 domain; that stretch reads LIHNIVWIAI…ALTFIPALWL (216 aa).

Belongs to the binding-protein-dependent transport system permease family. MalFG subfamily.

It localises to the cell membrane. Functionally, probably part of a binding-protein-dependent transport system PH1036/38/39. Probably responsible for the translocation of the substrate across the membrane. This chain is Probable ABC transporter permease protein PH1038, found in Pyrococcus horikoshii (strain ATCC 700860 / DSM 12428 / JCM 9974 / NBRC 100139 / OT-3).